We begin with the raw amino-acid sequence, 619 residues long: 1-deoxy-D-xylulose-5-phosphate synthase (619 aa).

Thiamine diphosphate-binding positions include His-74 and 115–117 (GHS). Mg(2+) is bound at residue Asp-146. Thiamine diphosphate is bound by residues 147-148 (GA), Asn-175, Tyr-285, and Glu-365. Asn-175 provides a ligand contact to Mg(2+).

It belongs to the transketolase family. DXPS subfamily. As to quaternary structure, homodimer. Mg(2+) serves as cofactor. Thiamine diphosphate is required as a cofactor.

The catalysed reaction is D-glyceraldehyde 3-phosphate + pyruvate + H(+) = 1-deoxy-D-xylulose 5-phosphate + CO2. It functions in the pathway metabolic intermediate biosynthesis; 1-deoxy-D-xylulose 5-phosphate biosynthesis; 1-deoxy-D-xylulose 5-phosphate from D-glyceraldehyde 3-phosphate and pyruvate: step 1/1. Functionally, catalyzes the acyloin condensation reaction between C atoms 2 and 3 of pyruvate and glyceraldehyde 3-phosphate to yield 1-deoxy-D-xylulose-5-phosphate (DXP). The protein is 1-deoxy-D-xylulose-5-phosphate synthase of Clostridium perfringens (strain 13 / Type A).